A 449-amino-acid chain; its full sequence is Phosphoglucosamine mutase (449 aa).

S101 acts as the Phosphoserine intermediate in catalysis. Residues S101, D242, D244, and D246 each contribute to the Mg(2+) site. The residue at position 101 (S101) is a Phosphoserine.

Belongs to the phosphohexose mutase family. It depends on Mg(2+) as a cofactor. Post-translationally, activated by phosphorylation.

The enzyme catalyses alpha-D-glucosamine 1-phosphate = D-glucosamine 6-phosphate. Functionally, catalyzes the conversion of glucosamine-6-phosphate to glucosamine-1-phosphate. This is Phosphoglucosamine mutase from Bradyrhizobium sp. (strain ORS 278).